The following is a 402-amino-acid chain: S-adenosylmethionine synthase (402 aa).

ATP is bound at residue histidine 16. A Mg(2+)-binding site is contributed by aspartate 18. K(+) is bound at residue glutamate 44. L-methionine-binding residues include glutamate 57 and glutamine 103. Positions 103–113 (QSPDIAQGVDT) are flexible loop. ATP-binding positions include 178–180 (DGK), 249–250 (KF), aspartate 258, 264–265 (RK), alanine 281, and lysine 285. An L-methionine-binding site is contributed by aspartate 258. Lysine 289 provides a ligand contact to L-methionine.

The protein belongs to the AdoMet synthase family. As to quaternary structure, homotetramer; dimer of dimers. Requires Mg(2+) as cofactor. K(+) is required as a cofactor.

It is found in the cytoplasm. It carries out the reaction L-methionine + ATP + H2O = S-adenosyl-L-methionine + phosphate + diphosphate. Its pathway is amino-acid biosynthesis; S-adenosyl-L-methionine biosynthesis; S-adenosyl-L-methionine from L-methionine: step 1/1. Its function is as follows. Catalyzes the formation of S-adenosylmethionine (AdoMet) from methionine and ATP. The overall synthetic reaction is composed of two sequential steps, AdoMet formation and the subsequent tripolyphosphate hydrolysis which occurs prior to release of AdoMet from the enzyme. This chain is S-adenosylmethionine synthase, found in Mycobacterium sp. (strain JLS).